A 251-amino-acid polypeptide reads, in one-letter code: Maleate isomerase (251 aa).

Substrate-binding positions include asparagine 14, 76–78, tyrosine 133, and asparagine 163; that span reads CLV. Cysteine 76 (nucleophile) is an active-site residue. Cysteine 76 carries the S-(2-succinyl)cysteine modification. Cysteine 194 (proton donor) is an active-site residue. Residue 195-196 participates in substrate binding; the sequence is VQ.

Belongs to the maleate isomerase family. As to quaternary structure, homodimer.

The catalysed reaction is maleate = fumarate. Its function is as follows. Catalyzes cis-trans isomerization of the C2-C3 double bond in maleate to yield fumarate. Shows a strict specificity for maleate, with no activity detected toward structurally related substrates including citraconate, mesaconate, dimethylmaleate, and maleamide. The polypeptide is Maleate isomerase (Nocardia farcinica (strain IFM 10152)).